The following is a 204-amino-acid chain: Small ribosomal subunit protein uS7 (204 aa).

Met1 carries the N-acetylmethionine modification. Thr2 carries the N-acetylthreonine; in 40S ribosomal protein S5, N-terminally processed modification. Phosphothreonine is present on Thr14. An N6-acetyllysine; alternate modification is found at Lys47. A Glycyl lysine isopeptide (Lys-Gly) (interchain with G-Cter in SUMO2); alternate cross-link involves residue Lys47. Residue Ser142 is modified to Phosphoserine.

It belongs to the universal ribosomal protein uS7 family. Component of the small ribosomal subunit. Part of the small subunit (SSU) processome, composed of more than 70 proteins and the RNA chaperone small nucleolar RNA (snoRNA) U3.

The protein localises to the cytoplasm. Its subcellular location is the nucleus. The protein resides in the nucleolus. In terms of biological role, component of the small ribosomal subunit. The ribosome is a large ribonucleoprotein complex responsible for the synthesis of proteins in the cell. Part of the small subunit (SSU) processome, first precursor of the small eukaryotic ribosomal subunit. During the assembly of the SSU processome in the nucleolus, many ribosome biogenesis factors, an RNA chaperone and ribosomal proteins associate with the nascent pre-rRNA and work in concert to generate RNA folding, modifications, rearrangements and cleavage as well as targeted degradation of pre-ribosomal RNA by the RNA exosome. The chain is Small ribosomal subunit protein uS7 (Rps5) from Rattus norvegicus (Rat).